The chain runs to 193 residues: ATP-dependent Clp protease proteolytic subunit (193 aa).

Catalysis depends on Ser-98, which acts as the Nucleophile. The active site involves His-123.

The protein belongs to the peptidase S14 family. In terms of assembly, fourteen ClpP subunits assemble into 2 heptameric rings which stack back to back to give a disk-like structure with a central cavity, resembling the structure of eukaryotic proteasomes.

Its subcellular location is the cytoplasm. It catalyses the reaction Hydrolysis of proteins to small peptides in the presence of ATP and magnesium. alpha-casein is the usual test substrate. In the absence of ATP, only oligopeptides shorter than five residues are hydrolyzed (such as succinyl-Leu-Tyr-|-NHMec, and Leu-Tyr-Leu-|-Tyr-Trp, in which cleavage of the -Tyr-|-Leu- and -Tyr-|-Trp bonds also occurs).. In terms of biological role, cleaves peptides in various proteins in a process that requires ATP hydrolysis. Has a chymotrypsin-like activity. Plays a major role in the degradation of misfolded proteins. The polypeptide is ATP-dependent Clp protease proteolytic subunit (Clostridium acetobutylicum (strain ATCC 824 / DSM 792 / JCM 1419 / IAM 19013 / LMG 5710 / NBRC 13948 / NRRL B-527 / VKM B-1787 / 2291 / W)).